The chain runs to 131 residues: M-zodatoxin-Lt8o (131 aa).

The signal sequence occupies residues 1–20 (MKYFVVALALVAAFACIAES). The propeptide occupies 21–60 (KPAESEHELAEVEEENELADLEDAVWLEHLADLSDLEEAR).

Belongs to the cationic peptide 06 (cytoinsectotoxin) family. As to expression, expressed by the venom gland.

Its subcellular location is the secreted. Its function is as follows. Insecticidal, cytolytic and antimicrobial peptide. Forms voltage-dependent, ion-permeable channels in membranes. At high concentration causes cell membrane lysis. This chain is M-zodatoxin-Lt8o (cit 1-14), found in Lachesana tarabaevi (Spider).